Here is a 349-residue protein sequence, read N- to C-terminus: Twinfilin-2-A (349 aa).

2 consecutive ADF-H domains span residues 4–139 and 177–313; these read QTGI…KHVS and GLSF…DEVH. A disordered region spans residues 321–349; the sequence is QAFAKPKGPAGKRGQKRLIKGPGENGEDS.

It belongs to the actin-binding proteins ADF family. Twinfilin subfamily. As to quaternary structure, interacts with G-actin; ADP-actin form and capping protein (CP).

The protein localises to the cytoplasm. Its subcellular location is the cytoskeleton. It localises to the perinuclear region. Functionally, actin-binding protein involved in motile and morphological processes. Inhibits actin polymerization, likely by sequestering G-actin. In Xenopus laevis (African clawed frog), this protein is Twinfilin-2-A (twf2-a).